The chain runs to 388 residues: Chaperone protein DnaJ (388 aa).

The 66-residue stretch at 4-69 (DYYDILGVDE…EKRQRYDQFG (66 aa)) folds into the J domain. Basic and acidic residues-rich tracts occupy residues 27–50 (KAME…KEAS), 58–73 (DPEK…HDGV), and 113–124 (GRSERGRGRPGS). Disordered stretches follow at residues 27–86 (KAME…GRGR) and 99–125 (SDIF…PGSD). The segment at 140-225 (GTEKNLRLQK…CGGEGRVQGE (86 aa)) adopts a CR-type zinc-finger fold. Residues C153, C156, C173, C176, C199, C202, C213, and C216 each contribute to the Zn(2+) site. CXXCXGXG motif repeat units follow at residues 153–160 (CESCDGTG), 173–180 (CPKCDGTG), 199–206 (CPRCEGEG), and 213–220 (CDDCGGEG). The segment covering 362–376 (AHDNFQPRPPEEDTQ) has biased composition (basic and acidic residues). The disordered stretch occupies residues 362–388 (AHDNFQPRPPEEDTQKSFFRRVSDVFS).

It belongs to the DnaJ family. In terms of assembly, homodimer. Requires Zn(2+) as cofactor.

It is found in the cytoplasm. Participates actively in the response to hyperosmotic and heat shock by preventing the aggregation of stress-denatured proteins and by disaggregating proteins, also in an autonomous, DnaK-independent fashion. Unfolded proteins bind initially to DnaJ; upon interaction with the DnaJ-bound protein, DnaK hydrolyzes its bound ATP, resulting in the formation of a stable complex. GrpE releases ADP from DnaK; ATP binding to DnaK triggers the release of the substrate protein, thus completing the reaction cycle. Several rounds of ATP-dependent interactions between DnaJ, DnaK and GrpE are required for fully efficient folding. Also involved, together with DnaK and GrpE, in the DNA replication of plasmids through activation of initiation proteins. This is Chaperone protein DnaJ from Salinibacter ruber (strain DSM 13855 / M31).